The primary structure comprises 61 residues: Large ribosomal subunit protein bL32 (61 aa).

The segment covering 1–16 (MPTPKKKTSRSKRDMR) has biased composition (basic residues). Residues 1-47 (MPTPKKKTSRSKRDMRRSHDGLTAPAIAVEKKTGELVRPHRAHKGAD) form a disordered region. Positions 29 to 38 (VEKKTGELVR) are enriched in basic and acidic residues.

Belongs to the bacterial ribosomal protein bL32 family.

This chain is Large ribosomal subunit protein bL32, found in Bdellovibrio bacteriovorus (strain ATCC 15356 / DSM 50701 / NCIMB 9529 / HD100).